The chain runs to 127 residues: Small ribosomal subunit protein uS13 (127 aa).

It belongs to the universal ribosomal protein uS13 family. Part of the 30S ribosomal subunit. Forms a loose heterodimer with protein S19. Forms two bridges to the 50S subunit in the 70S ribosome.

Its function is as follows. Located at the top of the head of the 30S subunit, it contacts several helices of the 16S rRNA. In the 70S ribosome it contacts the 23S rRNA (bridge B1a) and protein L5 of the 50S subunit (bridge B1b), connecting the 2 subunits; these bridges are implicated in subunit movement. Contacts the tRNAs in the A and P-sites. This is Small ribosomal subunit protein uS13 from Pelagibacter ubique (strain HTCC1062).